A 115-amino-acid chain; its full sequence is Large ribosomal subunit protein bL19 (115 aa).

The protein belongs to the bacterial ribosomal protein bL19 family.

In terms of biological role, this protein is located at the 30S-50S ribosomal subunit interface and may play a role in the structure and function of the aminoacyl-tRNA binding site. This Shouchella clausii (strain KSM-K16) (Alkalihalobacillus clausii) protein is Large ribosomal subunit protein bL19.